Here is a 1126-residue protein sequence, read N- to C-terminus: Probable serine/threonine-protein kinase DDB_G0280111 (1126 aa).

The Protein kinase domain occupies 16–295; the sequence is LNFVKQIAEG…NLLRNQQPLF (280 aa). ATP contacts are provided by residues 22–30 and K45; that span reads IAEGGFSYV. D147 (proton acceptor) is an active-site residue. Residues 314–333 are compositionally biased toward low complexity; the sequence is NNNNNINNNNNNNIVNGKNI. Disordered stretches follow at residues 314–469, 760–901, 944–1072, and 1095–1126; these read NNNN…NGNN, LNLN…QQQQ, TPSS…DEVR, and NKQS…GLLN. Residues 347–364 are compositionally biased toward pro residues; it reads TPTPPPPAPSQSPSPSPS. Residues 367-390 are compositionally biased toward polar residues; sequence VVNNIENNSNGLEHSNSNGNISQP. 3 stretches are compositionally biased toward low complexity: residues 413–422, 432–469, and 760–795; these read PPNNSNNSFD, NLSN…NGNN, and LNLN…LNSS. Composition is skewed to polar residues over residues 796-825 and 833-845; these read FDNI…SESG and EPTS…YQQS. A compositionally biased stretch (low complexity) spans 846 to 856; it reads NNNNNNNNNNN. Residues 857 to 866 show a composition bias toward polar residues; it reads GTPISLTPGS. Low complexity-rich tracts occupy residues 886 to 901, 953 to 971, and 1003 to 1035; these read QQQQ…QQQQ, PSTG…QQSQ, and NVNI…NPNL. A compositionally biased stretch (polar residues) spans 1095 to 1105; sequence NKQSRMNNPNN. The span at 1108–1126 shows a compositional bias: acidic residues; the sequence is DEGDSGFGDGEEEDEGLLN.

The protein belongs to the protein kinase superfamily. Ser/Thr protein kinase family.

The enzyme catalyses L-seryl-[protein] + ATP = O-phospho-L-seryl-[protein] + ADP + H(+). The catalysed reaction is L-threonyl-[protein] + ATP = O-phospho-L-threonyl-[protein] + ADP + H(+). In Dictyostelium discoideum (Social amoeba), this protein is Probable serine/threonine-protein kinase DDB_G0280111.